We begin with the raw amino-acid sequence, 546 residues long: Delta-1-pyrroline-5-carboxylate dehydrogenase (546 aa).

279 to 284 (KDISSN) provides a ligand contact to NAD(+). E297 acts as the Proton acceptor in catalysis. C331 (nucleophile) is an active-site residue.

The protein belongs to the aldehyde dehydrogenase family.

The protein localises to the cytoplasm. It catalyses the reaction L-glutamate 5-semialdehyde + NAD(+) + H2O = L-glutamate + NADH + 2 H(+). It functions in the pathway amino-acid degradation; L-proline degradation into L-glutamate; L-glutamate from L-proline: step 2/2. The sequence is that of Delta-1-pyrroline-5-carboxylate dehydrogenase (pruA) from Agaricus bisporus (White button mushroom).